Here is a 546-residue protein sequence, read N- to C-terminus: Choline/ethanolamine transporter FLVCR2 (546 aa).

The tract at residues Met1–His84 is disordered. Over Met1 to Ser93 the chain is Cytoplasmic. A compositionally biased stretch (polar residues) spans Gln22 to Pro49. 7 tandem repeats follow at residues Pro31–His36, Pro37–His42, Pro43–His48, Pro49–His54, Pro55–Asp60, Pro61–His66, and Pro67–His72. The interval Pro31–His84 is 9 X 6 AA tandem repeats of P-S-[VS]-S-[VIAG]-[HD]. Residues His54–Ser74 are compositionally biased toward low complexity. The stretch at Pro73–Gln78 is one 8; approximate repeat. A 9; approximate repeat occupies Pro79–His84. A helical membrane pass occupies residues Val94–Gln118. Choline contacts are provided by Asn115, Ala116, and Trp119. Residues Trp119–Ser136 are Extracellular-facing. Residues Ala137 to Lys164 traverse the membrane as a helical segment. The Cytoplasmic portion of the chain corresponds to Phe165–Gly166. The helical transmembrane segment at Leu167–Leu186 threads the bilayer. Residues Gly187–Leu193 lie on the Extracellular side of the membrane. The helical transmembrane segment at Phe194–Trp222 threads the bilayer. Position 212 (Leu212) interacts with choline. The Cytoplasmic portion of the chain corresponds to Phe223–Glu227. A helical membrane pass occupies residues Val228–Leu253. At Val254 to Lys258 the chain is on the extracellular side. The chain crosses the membrane as a helical span at residues Asp259–Val288. The Cytoplasmic segment spans residues Phe289–Asn324. The helical transmembrane segment at Leu325–His355 threads the bilayer. A choline-binding site is contributed by Tyr342. Residues Phe356–Gln359 are Extracellular-facing. A helical membrane pass occupies residues Glu360–Ser388. Residues Lys389–Thr390 lie on the Cytoplasmic side of the membrane. A helical membrane pass occupies residues Tyr391–Leu413. Topologically, residues Asn414 to Asn416 are extracellular. The helical transmembrane segment at His417–Leu446 threads the bilayer. Residues Thr447–Val454 are Cytoplasmic-facing. Residues Ser455–Asn480 form a helical membrane-spanning segment. Position 464 (Gln464) interacts with choline. At Tyr481–Gly482 the chain is on the extracellular side. A helical membrane pass occupies residues Ser483–Lys505. Over Ser506–Leu546 the chain is Cytoplasmic. Basic and acidic residues predominate over residues Gln511–Gln523. The segment at Gln511–Leu546 is disordered. Ser535 is subject to Phosphoserine.

It belongs to the major facilitator superfamily. Feline leukemia virus subgroup C receptor (TC 2.A.1.28.1) family. As to quaternary structure, interacts with components of electron transfer chain complexes III, IV and V including CYC1, NDUFA4, COX4I1, ATP5PD and ATP5F1C; these interactions occur in the absence of heme and are disrupted upon heme binding. Interacts with ATP2A2; this interaction occurs in the absence of heme and promotes ATP2A2 proteasomal degradation; the complex is dissociated upon heme binding. Interacts with HMOX1; this interaction is potentiated in the presence of heme.

Its subcellular location is the cell membrane. The protein localises to the mitochondrion membrane. The protein resides in the endoplasmic reticulum membrane. The enzyme catalyses choline(out) = choline(in). It carries out the reaction ethanolamine(in) = ethanolamine(out). It catalyses the reaction heme b(in) = heme b(out). Its function is as follows. Choline uniporter that specifically mediates choline uptake at the blood-brain-barrier. Responsible for the majority of choline uptake across the blood-brain-barrier from the circulation into the brain. Choline, a nutrient critical for brain development, is a precursor of phosphatidylcholine, as well as betaine. Also mediates transport of ethanolamine. Choline and ethanolamine transport is not coupled with proton transport and is exclusively driven by the choline gradient across the plasma membrane. However, the presence of an inwardly directed proton gradient enhances choline uptake. Also acts as a heme b transporter. Required to regulate mitochondrial respiration processes, ATP synthesis and thermogenesis. At low heme levels, interacts with components of electron transfer chain (ETC) complexes and ATP2A2, leading to ubiquitin-mediated degradation of ATP2A2 and inhibition of thermogenesis. Upon heme binding, dissociates from ETC complexes to allow switching from mitochondrial ATP synthesis to thermogenesis. In Rattus norvegicus (Rat), this protein is Choline/ethanolamine transporter FLVCR2 (Flvcr2).